The following is a 192-amino-acid chain: Small ribosomal subunit protein bS16 (192 aa).

Positions 153-192 are disordered; sequence AEAKAKAEAEAAAAAEEAAETEETPVEAAAEEAPAAESAE. Over residues 178 to 192 the composition is skewed to low complexity; sequence VEAAAEEAPAAESAE.

It belongs to the bacterial ribosomal protein bS16 family.

This chain is Small ribosomal subunit protein bS16, found in Porphyromonas gingivalis (strain ATCC BAA-308 / W83).